The sequence spans 436 residues: tRNA(Ile)-lysidine synthase (436 aa).

21-26 provides a ligand contact to ATP; it reads SGGVDS.

Belongs to the tRNA(Ile)-lysidine synthase family.

Its subcellular location is the cytoplasm. The enzyme catalyses cytidine(34) in tRNA(Ile2) + L-lysine + ATP = lysidine(34) in tRNA(Ile2) + AMP + diphosphate + H(+). Functionally, ligates lysine onto the cytidine present at position 34 of the AUA codon-specific tRNA(Ile) that contains the anticodon CAU, in an ATP-dependent manner. Cytidine is converted to lysidine, thus changing the amino acid specificity of the tRNA from methionine to isoleucine. This Aster yellows witches'-broom phytoplasma (strain AYWB) protein is tRNA(Ile)-lysidine synthase.